The sequence spans 1212 residues: DNA-directed RNA polymerase subunit beta (1212 aa).

A compositionally biased stretch (basic and acidic residues) spans 1176–1195 (QQEKKKLAEEAAKKDDKSAE). The segment at 1176 to 1212 (QQEKKKLAEEAAKKDDKSAEPVDQSDSSTSSDDKVSK) is disordered.

Belongs to the RNA polymerase beta chain family. The RNAP catalytic core consists of 2 alpha, 1 beta, 1 beta' and 1 omega subunit. When a sigma factor is associated with the core the holoenzyme is formed, which can initiate transcription.

The enzyme catalyses RNA(n) + a ribonucleoside 5'-triphosphate = RNA(n+1) + diphosphate. Functionally, DNA-dependent RNA polymerase catalyzes the transcription of DNA into RNA using the four ribonucleoside triphosphates as substrates. The chain is DNA-directed RNA polymerase subunit beta from Lactobacillus gasseri (strain ATCC 33323 / DSM 20243 / BCRC 14619 / CIP 102991 / JCM 1131 / KCTC 3163 / NCIMB 11718 / NCTC 13722 / AM63).